The sequence spans 145 residues: 3-hydroxyacyl-[acyl-carrier-protein] dehydratase FabZ (145 aa).

H49 is a catalytic residue.

Belongs to the thioester dehydratase family. FabZ subfamily.

The protein resides in the cytoplasm. The catalysed reaction is a (3R)-hydroxyacyl-[ACP] = a (2E)-enoyl-[ACP] + H2O. Involved in unsaturated fatty acids biosynthesis. Catalyzes the dehydration of short chain beta-hydroxyacyl-ACPs and long chain saturated and unsaturated beta-hydroxyacyl-ACPs. This Rickettsia africae (strain ESF-5) protein is 3-hydroxyacyl-[acyl-carrier-protein] dehydratase FabZ.